The following is a 450-amino-acid chain: UDP-N-acetylmuramoylalanine--D-glutamate ligase (450 aa).

ATP is bound at residue 119 to 125 (GSNGKTT).

It belongs to the MurCDEF family.

Its subcellular location is the cytoplasm. The enzyme catalyses UDP-N-acetyl-alpha-D-muramoyl-L-alanine + D-glutamate + ATP = UDP-N-acetyl-alpha-D-muramoyl-L-alanyl-D-glutamate + ADP + phosphate + H(+). It functions in the pathway cell wall biogenesis; peptidoglycan biosynthesis. Its function is as follows. Cell wall formation. Catalyzes the addition of glutamate to the nucleotide precursor UDP-N-acetylmuramoyl-L-alanine (UMA). The chain is UDP-N-acetylmuramoylalanine--D-glutamate ligase from Streptococcus pneumoniae (strain ATCC 700669 / Spain 23F-1).